The chain runs to 273 residues: Phosphate import ATP-binding protein PstB 1 (273 aa).

The region spanning 27–268 (ISIEHLSLYY…PLKKQTEDYI (242 aa)) is the ABC transporter domain. 59 to 66 (GPSGCGKS) serves as a coordination point for ATP.

Belongs to the ABC transporter superfamily. Phosphate importer (TC 3.A.1.7) family. In terms of assembly, the complex is composed of two ATP-binding proteins (PstB), two transmembrane proteins (PstC and PstA) and a solute-binding protein (PstS).

The protein resides in the cell inner membrane. It carries out the reaction phosphate(out) + ATP + H2O = ADP + 2 phosphate(in) + H(+). Its function is as follows. Part of the ABC transporter complex PstSACB involved in phosphate import. Responsible for energy coupling to the transport system. The polypeptide is Phosphate import ATP-binding protein PstB 1 (Vibrio cholerae serotype O1 (strain ATCC 39315 / El Tor Inaba N16961)).